The following is a 358-amino-acid chain: Putative zinc metalloprotease RC0203 (358 aa).

His-18 contributes to the Zn(2+) binding site. Residue Glu-19 is part of the active site. His-22 contacts Zn(2+). 4 helical membrane passes run 52–71 (GVRW…IYGY), 97–119 (FLIV…AGFY), 285–307 (YLLF…IPVL), and 332–351 (ILLQ…AVSN). The PDZ domain occupies 102–186 (AGPLINYLLA…STLTIERKSE (85 aa)).

Belongs to the peptidase M50B family. Requires Zn(2+) as cofactor.

The protein resides in the cell inner membrane. This chain is Putative zinc metalloprotease RC0203, found in Rickettsia conorii (strain ATCC VR-613 / Malish 7).